Reading from the N-terminus, the 354-residue chain is MTALKNDRFLRALLKQPVDVTPVWMMRQAGRYLPEYRASRAKAGDFMSLCMNPQFACEVTLQPLERYPLDAAILFSDILTIPDAMGLGLYFETGEGPRFKKVISTPADIEALLIPDPQKDLGYVMDAVSTIRRELNGRVPLIGFSGSPWTLATYMVEGGSSKDFRKTKAMAYDNPQALHLLLDKLAQSVTSYLNGQILAGAQAVQIFDTWGGNLSAAAYQEFSLAYMRKIVSGLIREHDGRKVPVILFTKNGGLWLESIAEAGADALGLDWTCEIGDARRRVGDKVALQGNMDPTVLYAKPEAIRNEVARILASYGKGTGHVFNLGHGITPEVDPEHAGVFINAVHELSAQYHQ.

Substrate-binding positions include 27 to 31 (RQAGR), Asp77, Tyr154, Thr209, and His327.

The protein belongs to the uroporphyrinogen decarboxylase family. As to quaternary structure, homodimer.

Its subcellular location is the cytoplasm. The catalysed reaction is uroporphyrinogen III + 4 H(+) = coproporphyrinogen III + 4 CO2. It participates in porphyrin-containing compound metabolism; protoporphyrin-IX biosynthesis; coproporphyrinogen-III from 5-aminolevulinate: step 4/4. Catalyzes the decarboxylation of four acetate groups of uroporphyrinogen-III to yield coproporphyrinogen-III. The sequence is that of Uroporphyrinogen decarboxylase from Pseudomonas putida (strain W619).